A 410-amino-acid chain; its full sequence is Na(+)/H(+) antiporter NhaA 1/4 (410 aa).

The next 11 membrane-spanning stretches (helical) occupy residues 16 to 36, 55 to 75, 95 to 115, 125 to 145, 156 to 176, 178 to 198, 215 to 235, 275 to 295, 299 to 319, 340 to 360, and 371 to 391; these read VGGS…NSPL, LNLS…FFIV, ALPI…FLAF, GGWG…LAVV, FLLT…AVAC, SGIN…FGYL, AWLL…ACGV, IALP…AGGF, AITW…IFGG, IAGI…IAEL, and AKGA…LLLG.

Belongs to the NhaA Na(+)/H(+) (TC 2.A.33) antiporter family.

The protein resides in the cell membrane. It carries out the reaction Na(+)(in) + 2 H(+)(out) = Na(+)(out) + 2 H(+)(in). Functionally, na(+)/H(+) antiporter that extrudes sodium in exchange for external protons. This Streptomyces coelicolor (strain ATCC BAA-471 / A3(2) / M145) protein is Na(+)/H(+) antiporter NhaA 1/4.